The chain runs to 56 residues: uncharacterized protein (56 aa).

This is an uncharacterized protein from Orgyia pseudotsugata (Douglas-fir tussock moth).